The sequence spans 777 residues: Zinc finger protein 786 (777 aa).

A KRAB domain is found at leucine 9–glutamate 80. A C2H2-type 1; degenerate zinc finger spans residues asparagine 194–histidine 216. A C2H2-type 2 zinc finger spans residues isoleucine 240–histidine 262. The C2H2-type 3; degenerate zinc-finger motif lies at proline 268–serine 291. The segment at valine 420–leucine 442 adopts a C2H2-type 4; degenerate zinc-finger fold. C2H2-type zinc fingers lie at residues phenylalanine 448–histidine 470, phenylalanine 476–histidine 498, phenylalanine 504–histidine 526, phenylalanine 532–histidine 554, phenylalanine 560–histidine 582, phenylalanine 588–histidine 610, phenylalanine 616–histidine 638, phenylalanine 644–histidine 665, phenylalanine 671–histidine 693, phenylalanine 699–histidine 721, and phenylalanine 727–histidine 749.

It belongs to the krueppel C2H2-type zinc-finger protein family.

The protein resides in the nucleus. Functionally, may be involved in transcriptional regulation. The chain is Zinc finger protein 786 (Znf786) from Mus musculus (Mouse).